A 560-amino-acid chain; its full sequence is Formate--tetrahydrofolate ligase (560 aa).

70-77 (TPAGEGKT) lines the ATP pocket.

The protein belongs to the formate--tetrahydrofolate ligase family.

It catalyses the reaction (6S)-5,6,7,8-tetrahydrofolate + formate + ATP = (6R)-10-formyltetrahydrofolate + ADP + phosphate. The protein operates within one-carbon metabolism; tetrahydrofolate interconversion. This Methanocorpusculum labreanum (strain ATCC 43576 / DSM 4855 / Z) protein is Formate--tetrahydrofolate ligase.